Reading from the N-terminus, the 950-residue chain is Protocadherin alpha-13 (950 aa).

An N-terminal signal peptide occupies residues methionine 1 to glycine 29. Topologically, residues glutamine 30–asparagine 697 are extracellular. 6 Cadherin domains span residues serine 34–phenylalanine 133, proline 134–phenylalanine 242, tyrosine 243–valine 350, threonine 351–phenylalanine 455, alanine 456–leucine 565, and methionine 581–alanine 678. 2 N-linked (GlcNAc...) asparagine glycosylation sites follow: asparagine 257 and asparagine 265. N-linked (GlcNAc...) asparagine glycosylation occurs at asparagine 548. Residues valine 698 to tyrosine 718 traverse the membrane as a helical segment. Residues threonine 719–glutamine 950 lie on the Cytoplasmic side of the membrane. PXXP repeat units follow at residues proline 734–proline 737, proline 774–proline 777, proline 799–proline 802, proline 832–proline 835, proline 873–proline 876, and proline 891–proline 894. Positions proline 734–proline 894 are 6 X 4 AA repeats of P-X-X-P. 2 disordered regions span residues leucine 780–tryptophan 806 and arginine 829–glutamine 950. The segment covering glycine 787 to arginine 800 has biased composition (basic and acidic residues). Basic and acidic residues predominate over residues aspartate 909–lysine 923.

It is found in the cell membrane. In terms of biological role, potential calcium-dependent cell-adhesion protein. May be involved in the establishment and maintenance of specific neuronal connections in the brain. This is Protocadherin alpha-13 (PCDHA13) from Homo sapiens (Human).